A 284-amino-acid chain; its full sequence is Anaerobic dimethyl sulfoxide reductase chain YnfH (284 aa).

Topologically, residues M1–P9 are periplasmic. Residues L10–G30 form a helical membrane-spanning segment. The Cytoplasmic segment spans residues W31 to R45. A helical transmembrane segment spans residues G46–G66. Residues S67–E86 are Periplasmic-facing. Residues I87–G107 traverse the membrane as a helical segment. Over K108–K115 the chain is Cytoplasmic. Residues L116 to Y136 form a helical membrane-spanning segment. Topologically, residues Q137–Y148 are periplasmic. A helical membrane pass occupies residues T149–L169. At R170–P180 the chain is on the cytoplasmic side. The helical transmembrane segment at F181 to L201 threads the bilayer. At S202–S222 the chain is on the periplasmic side. Residues L223 to I243 form a helical membrane-spanning segment. Residues R244–V250 lie on the Cytoplasmic side of the membrane. The chain crosses the membrane as a helical span at residues A251–F271. Topologically, residues Y272–G284 are periplasmic.

It belongs to the DmsC family. In terms of assembly, the complex consists of three subunits: YnfF, the reductase; YnfG, an electron transfer protein, and YnfH, a membrane anchor protein.

Its subcellular location is the cell inner membrane. Terminal reductase during anaerobic growth on various sulfoxide and N-oxide compounds. The C subunit anchors the other two subunits to the membrane and stabilize the catalytic subunits. The polypeptide is Anaerobic dimethyl sulfoxide reductase chain YnfH (ynfH) (Escherichia coli (strain K12)).